A 188-amino-acid polypeptide reads, in one-letter code: Elongation factor P-like protein (188 aa).

This sequence belongs to the elongation factor P family.

The chain is Elongation factor P-like protein from Stenotrophomonas maltophilia (strain R551-3).